Reading from the N-terminus, the 314-residue chain is Small ribosomal subunit protein uS2c (314 aa).

This sequence belongs to the universal ribosomal protein uS2 family.

The protein resides in the plastid. The protein localises to the chloroplast. The polypeptide is Small ribosomal subunit protein uS2c (rps2) (Stigeoclonium helveticum (Green alga)).